Here is a 124-residue protein sequence, read N- to C-terminus: Small ribosomal subunit protein bS6 (124 aa).

Belongs to the bacterial ribosomal protein bS6 family.

Its function is as follows. Binds together with bS18 to 16S ribosomal RNA. This chain is Small ribosomal subunit protein bS6, found in Actinobacillus pleuropneumoniae serotype 5b (strain L20).